A 374-amino-acid chain; its full sequence is MKALIFAAAGLLLLLPTFCQSGMENDTNNLAKPTLPIKTFRGAPPNSFEEFPFSALEGWTGATITVKIKCPEESASHLHVKNATMGYLTSSLSTKLIPAIYLLVFVVGVPANAVTLWMLFFRTRSICTTVFYTNLAIADFLFCVTLPFKIAYHLNGNNWVFGEVLCRATTVIFYGNMYCSILLLACISINRYLAIVHPFTYRGLPKHTYALVTCGLVWATVFLYMLPFFILKQEYYLVQPDITTCHDVHNTCESSSPFQLYYFISLAFFGFLIPFVLIIYCYAAIIRTLNAYDHRWLWYVKASLLILVIFTICFAPSNIILIIHHANYYYNNTDGLYFIYLIALCLGSLNSCLDPFLYFLMSKTRNHSTAYLTK.

Positions 1–21 (MKALIFAAAGLLLLLPTFCQS) are cleaved as a signal peptide. Positions 22–38 (GMENDTNNLAKPTLPIK) are cleaved as a propeptide — removed for receptor activation. N-linked (GlcNAc...) asparagine glycosylation is found at N25 and N82. Residues 39–94 (TFRGAPPNSFEEFPFSALEGWTGATITVKIKCPEESASHLHVKNATMGYLTSSLST) lie on the Extracellular side of the membrane. The chain crosses the membrane as a helical span at residues 95–120 (KLIPAIYLLVFVVGVPANAVTLWMLF). Topologically, residues 121–128 (FRTRSICT) are cytoplasmic. The chain crosses the membrane as a helical span at residues 129-148 (TVFYTNLAIADFLFCVTLPF). The Extracellular segment spans residues 149–167 (KIAYHLNGNNWVFGEVLCR). A disulfide bridge connects residues C166 and C245. Residues 168-189 (ATTVIFYGNMYCSILLLACISI) traverse the membrane as a helical segment. At 190-206 (NRYLAIVHPFTYRGLPK) the chain is on the cytoplasmic side. Residues 207–230 (HTYALVTCGLVWATVFLYMLPFFI) traverse the membrane as a helical segment. The Extracellular portion of the chain corresponds to 231 to 260 (LKQEYYLVQPDITTCHDVHNTCESSSPFQL). A helical membrane pass occupies residues 261–280 (YYFISLAFFGFLIPFVLIIY). At 281–297 (CYAAIIRTLNAYDHRWL) the chain is on the cytoplasmic side. A helical membrane pass occupies residues 298-322 (WYVKASLLILVIFTICFAPSNIILI). The Extracellular segment spans residues 323 to 336 (IHHANYYYNNTDGL). An N-linked (GlcNAc...) asparagine glycan is attached at N331. A helical membrane pass occupies residues 337-361 (YFIYLIALCLGSLNSCLDPFLYFLM). Topologically, residues 362–374 (SKTRNHSTAYLTK) are cytoplasmic.

It belongs to the G-protein coupled receptor 1 family. In terms of assembly, interacts with INSC/inscuteable and probably GPSM2. A proteolytic cleavage generates a new N-terminus that functions as a tethered ligand. In terms of tissue distribution, highest expression in the megakaryocytes of the bone marrow, lower in mature megakaryocytes, in platelets and in a variety of other tissues such as heart and gut.

The protein localises to the cell membrane. Receptor for activated thrombin coupled to G proteins that stimulate phosphoinositide hydrolysis. The sequence is that of Proteinase-activated receptor 3 (F2RL2) from Homo sapiens (Human).